Here is a 419-residue protein sequence, read N- to C-terminus: UDP-N-acetylglucosamine 1-carboxyvinyltransferase (419 aa).

22–23 (KN) contributes to the phosphoenolpyruvate binding site. Arginine 93 serves as a coordination point for UDP-N-acetyl-alpha-D-glucosamine. The active-site Proton donor is the cysteine 117. Position 117 is a 2-(S-cysteinyl)pyruvic acid O-phosphothioketal (cysteine 117). UDP-N-acetyl-alpha-D-glucosamine contacts are provided by residues 122-126 (RPVDL), aspartate 308, and isoleucine 330.

It belongs to the EPSP synthase family. MurA subfamily.

The protein localises to the cytoplasm. It catalyses the reaction phosphoenolpyruvate + UDP-N-acetyl-alpha-D-glucosamine = UDP-N-acetyl-3-O-(1-carboxyvinyl)-alpha-D-glucosamine + phosphate. It functions in the pathway cell wall biogenesis; peptidoglycan biosynthesis. In terms of biological role, cell wall formation. Adds enolpyruvyl to UDP-N-acetylglucosamine. The polypeptide is UDP-N-acetylglucosamine 1-carboxyvinyltransferase (Pseudomonas putida (Arthrobacter siderocapsulatus)).